The primary structure comprises 685 residues: Threonine--tRNA ligase (685 aa).

The segment at Met1 to Ala28 is disordered. Residues Met1–Ala65 form the TGS domain. Residues Asp262 to Pro568 are catalytic. Cys367, His418, and His545 together coordinate Zn(2+).

The protein belongs to the class-II aminoacyl-tRNA synthetase family. In terms of assembly, homodimer. Zn(2+) serves as cofactor.

It is found in the cytoplasm. The enzyme catalyses tRNA(Thr) + L-threonine + ATP = L-threonyl-tRNA(Thr) + AMP + diphosphate + H(+). Functionally, catalyzes the attachment of threonine to tRNA(Thr) in a two-step reaction: L-threonine is first activated by ATP to form Thr-AMP and then transferred to the acceptor end of tRNA(Thr). Also edits incorrectly charged L-seryl-tRNA(Thr). The polypeptide is Threonine--tRNA ligase (Rhodococcus erythropolis (strain PR4 / NBRC 100887)).